Consider the following 374-residue polypeptide: Succinyl-diaminopimelate desuccinylase (374 aa).

Position 66 (histidine 66) interacts with Zn(2+). Aspartate 68 is a catalytic residue. Position 99 (aspartate 99) interacts with Zn(2+). Glutamate 133 functions as the Proton acceptor in the catalytic mechanism. Zn(2+) is bound by residues glutamate 134, glutamate 162, and histidine 348.

The protein belongs to the peptidase M20A family. DapE subfamily. As to quaternary structure, homodimer. Requires Zn(2+) as cofactor. Co(2+) serves as cofactor.

It carries out the reaction N-succinyl-(2S,6S)-2,6-diaminopimelate + H2O = (2S,6S)-2,6-diaminopimelate + succinate. It functions in the pathway amino-acid biosynthesis; L-lysine biosynthesis via DAP pathway; LL-2,6-diaminopimelate from (S)-tetrahydrodipicolinate (succinylase route): step 3/3. Functionally, catalyzes the hydrolysis of N-succinyl-L,L-diaminopimelic acid (SDAP), forming succinate and LL-2,6-diaminopimelate (DAP), an intermediate involved in the bacterial biosynthesis of lysine and meso-diaminopimelic acid, an essential component of bacterial cell walls. This chain is Succinyl-diaminopimelate desuccinylase, found in Coxiella burnetii (strain CbuK_Q154) (Coxiella burnetii (strain Q154)).